Consider the following 459-residue polypeptide: Zinc finger and BTB domain-containing protein 9 (459 aa).

Residues 48 to 112 form the BTB domain; sequence CDVSLLVQGR…IYSGSLHLPL (65 aa). Over residues 178-189 the composition is skewed to polar residues; sequence VRSSASTENSVL. Disordered stretches follow at residues 178 to 200 and 212 to 274; these read VRSS…EGSE and EEEE…ASQI. Glycyl lysine isopeptide (Lys-Gly) (interchain with G-Cter in SUMO2) cross-links involve residues K285, K293, and K368. Residues 293–356 form a disordered region; it reads KEKTKVLSGE…GGTGQAMHGP (64 aa). The segment at 397–419 adopts a C2H2-type 1 zinc-finger fold; sequence FGCGICNKRFKLKHHLTEHMKTH. A C2H2-type 2; atypical zinc finger spans residues 424–446; the sequence is HACPHCGRRFRVQAFFLRHRDLC.

The protein localises to the nucleus. In terms of biological role, may be involved in transcriptional regulation. This chain is Zinc finger and BTB domain-containing protein 9 (Zbtb9), found in Mus musculus (Mouse).